The chain runs to 1376 residues: YLP motif-containing protein 1 (1376 aa).

Disordered regions lie at residues 1–335 (MYPN…PEED) and 511–1058 (STIP…PPGR). The span at 14-27 (YPPPPVPPPPPPVA) shows a compositional bias: pro residues. Composition is skewed to low complexity over residues 31–50 (ASPG…SSSG) and 59–80 (LAQL…LQPH). Composition is skewed to pro residues over residues 81-93 (HLPP…PPVM), 102-114 (QPPP…PPGP), 148-158 (PESPPVPPGSY), 166-176 (MPPPQPPPSYY), and 184-204 (YLPP…PPSI). Polar residues-rich tracts occupy residues 207–216 (GNKTTIQQEP) and 238–260 (STMT…LQQR). Residues 261–271 (TKVHLPGHKKG) show a composition bias toward basic residues. The span at 277-286 (DVPEPIKEEA) shows a compositional bias: basic and acidic residues. 4 stretches are compositionally biased toward pro residues: residues 303–320 (PPLP…PPEE), 511–537 (STIP…PGMP), 545–594 (LPPP…PQGM), and 632–641 (PPSPYHPPPQ). The span at 642–671 (SEQGNSKPLNKVFSSEQGLGESSSALSQSV) shows a compositional bias: polar residues. Lys675 is modified (N6-methyllysine). The span at 698–714 (RGPREQKEQLQKLKDFG) shows a compositional bias: basic and acidic residues. Composition is skewed to pro residues over residues 738-753 (MYPP…PMGK), 773-796 (TRPP…PPVI), and 840-870 (PVLP…PPPV). Lys886 participates in a covalent cross-link: Glycyl lysine isopeptide (Lys-Gly) (interchain with G-Cter in SUMO2). 4 stretches are compositionally biased toward basic and acidic residues: residues 896-930 (ITLR…EPYF), 937-1004 (TDHR…DRPP), 1013-1023 (GERRTYPEERM), and 1039-1058 (RVEK…PPGR). Lys943 participates in a covalent cross-link: Glycyl lysine isopeptide (Lys-Gly) (interchain with G-Cter in SUMO2). The interval 1326–1333 (KKRVRWAD) is involved in interaction with PPP1CA.

In terms of assembly, interacts with PPP1CA and NCOA5. Forms a complex with ILF2, ILF3, KHDRBS1, RBMX, NCOA5 and PPP1CA. In terms of tissue distribution, high level expression seen in the brain, adipose tissue, heart and kidney, with a low level expression in muscle, spleen and lung (at protein level).

It localises to the nucleus. The protein localises to the nucleus speckle. Functionally, plays a role in the reduction of telomerase activity during differentiation of embryonic stem cells by binding to the core promoter of TERT and controlling its down-regulation. The polypeptide is YLP motif-containing protein 1 (Ylpm1) (Rattus norvegicus (Rat)).